We begin with the raw amino-acid sequence, 440 residues long: Probable secretory pathway GDP dissociation inhibitor 1 (440 aa).

The protein belongs to the Rab GDI family.

In Schizosaccharomyces pombe (strain 972 / ATCC 24843) (Fission yeast), this protein is Probable secretory pathway GDP dissociation inhibitor 1 (gdi1).